Reading from the N-terminus, the 126-residue chain is Large ribosomal subunit protein bL17 (126 aa).

Belongs to the bacterial ribosomal protein bL17 family. In terms of assembly, part of the 50S ribosomal subunit. Contacts protein L32.

The polypeptide is Large ribosomal subunit protein bL17 (Xylella fastidiosa (strain M12)).